Reading from the N-terminus, the 306-residue chain is Dermonecrotic toxin LarSicTox-alphaIB1ai (306 aa).

A signal peptide is located at residue valine 1. The propeptide occupies 2–27; the sequence is RATEKFASMYFFCHSPQSAETDVAER. Histidine 38 is a catalytic residue. Residues glutamate 58 and aspartate 60 each contribute to the Mg(2+) site. Histidine 74 (nucleophile) is an active-site residue. Intrachain disulfides connect cysteine 78-cysteine 84 and cysteine 80-cysteine 223. Aspartate 118 is a Mg(2+) binding site. The N-linked (GlcNAc...) asparagine glycan is linked to asparagine 283.

The protein belongs to the arthropod phospholipase D family. Class II subfamily. It depends on Mg(2+) as a cofactor. As to expression, expressed by the venom gland.

The protein resides in the secreted. The catalysed reaction is an N-(acyl)-sphingosylphosphocholine = an N-(acyl)-sphingosyl-1,3-cyclic phosphate + choline. It carries out the reaction an N-(acyl)-sphingosylphosphoethanolamine = an N-(acyl)-sphingosyl-1,3-cyclic phosphate + ethanolamine. It catalyses the reaction a 1-acyl-sn-glycero-3-phosphocholine = a 1-acyl-sn-glycero-2,3-cyclic phosphate + choline. The enzyme catalyses a 1-acyl-sn-glycero-3-phosphoethanolamine = a 1-acyl-sn-glycero-2,3-cyclic phosphate + ethanolamine. Its function is as follows. Dermonecrotic toxins cleave the phosphodiester linkage between the phosphate and headgroup of certain phospholipids (sphingolipid and lysolipid substrates), forming an alcohol (often choline) and a cyclic phosphate. This toxin acts on sphingomyelin (SM). It may also act on ceramide phosphoethanolamine (CPE), lysophosphatidylcholine (LPC) and lysophosphatidylethanolamine (LPE), but not on lysophosphatidylserine (LPS), and lysophosphatidylglycerol (LPG). It acts by transphosphatidylation, releasing exclusively cyclic phosphate products as second products. Induces dermonecrosis, hemolysis, increased vascular permeability, edema, inflammatory response, and platelet aggregation. The chain is Dermonecrotic toxin LarSicTox-alphaIB1ai from Loxosceles arizonica (Arizona brown spider).